A 412-amino-acid chain; its full sequence is Branched-chain alpha-ketoacid dehydrogenase kinase (412 aa).

A mitochondrion-targeting transit peptide spans Met1–Arg30. Ser31 carries the post-translational modification Phosphoserine. Positions Leu159–Asp404 constitute a Histidine kinase domain. N6-acetyllysine occurs at positions 192 and 233. Asn279 and Asp315 together coordinate ATP. Mg(2+) is bound at residue Asn279. 3 residues coordinate K(+): Val328, Asp330, and Phe333. The ATP site is built by Thr334 and Thr335. 2 positions are modified to phosphoserine: Ser356 and Ser360. ATP contacts are provided by His364, Gly367, and Leu370. A K(+)-binding site is contributed by Gly367.

The protein belongs to the PDK/BCKDK protein kinase family. Homodimer. Homotetramer. Dimerizes through interaction of two opposing nucleotide-binding domains. Interacts with E2 component of the branched-chain alpha-ketoacid dehydrogenase (BCKDH) complex. Competes with BCKDK for binding to the E2 component; this interaction is modulated by branched-chain alpha-keto acids. At steady state, BCKDH holoenzyme contains BCKDK and BCKDHA is phosphorylated. In response to high levels of branched-chain alpha-keto acids, the inhibitory BCKDK is replaced by activating PPM1K leading to BCKDHA dephosphorylation and BCAA degradation. In terms of processing, autophosphorylated. Expressed in heart and liver.

The protein localises to the mitochondrion matrix. The protein resides in the mitochondrion. It carries out the reaction L-seryl-[3-methyl-2-oxobutanoate dehydrogenase] + ATP = O-phospho-L-seryl-[3-methyl-2-oxobutanoate dehydrogenase] + ADP + H(+). The enzyme catalyses L-seryl-[protein] + ATP = O-phospho-L-seryl-[protein] + ADP + H(+). Its activity is regulated as follows. The ATP-ase activity is up-regulated by potassium and rubidium ions but not by sodium ions. Up-regulated in the presence of apo- or lipoylated-DBT/E2b subunit of the BCKDH complex. Functionally, serine/threonine-protein kinase component of macronutrients metabolism. Forms a functional kinase and phosphatase pair with PPM1K, serving as a metabolic regulatory node that coordinates branched-chain amino acids (BCAAs) with glucose and lipid metabolism via two distinct phosphoprotein targets: mitochondrial BCKDHA subunit of the branched-chain alpha-ketoacid dehydrogenase (BCKDH) complex and cytosolic ACLY, a lipogenic enzyme of Krebs cycle. Phosphorylates and inactivates mitochondrial BCKDH complex a multisubunit complex consisting of three multimeric components each involved in different steps of BCAA catabolism: E1 composed of BCKDHA and BCKDHB, E2 core composed of DBT monomers, and E3 composed of DLD monomers. Associates with the E2 component of BCKDH complex and phosphorylates BCKDHA on Ser-333, leading to conformational changes that interrupt substrate channeling between E1 and E2 and inactivates the BCKDH complex. phosphorylates ACLY on Ser-455 in response to changes in cellular carbohydrate abundance such as occurs during fasting to feeding metabolic transition. Refeeding stimulates MLXIPL/ChREBP transcription factor, leading to increased BCKDK to PPM1K expression ratio, phosphorylation and activation of ACLY that ultimately results in the generation of malonyl-CoA and oxaloacetate immediate substrates of de novo lipogenesis and glucogenesis, respectively. Recognizes phosphosites having SxxE/D canonical motif. This chain is Branched-chain alpha-ketoacid dehydrogenase kinase (Bckdk), found in Rattus norvegicus (Rat).